A 528-amino-acid chain; its full sequence is Protein MGF 505-7R (528 aa).

It belongs to the asfivirus MGF 505 family. As to quaternary structure, interacts with host STING1. Interacts with host JAK1; this interaction leads to JAK1 degradation. Interacts with host JAK2; this interaction leads to JAK2 degradation. Interacts with host RELA; this interaction inhibits NF-kappa-B promoter activity.

It localises to the host cytoplasm. Plays a role in virus cell tropism, and may be required for efficient virus replication in macrophages. Interferes with host NF-kappa-B promoter activity mediated by TLR8. Mechanistically, inhibits the phosphorylation and subsequent nuclear translocation of host NF-kappa-B RELA subunit downstream of TLR8. Promotes the expression of the autophagy-related protein host ULK1 to degrade host STING and inhibit the interferon response. Also inhibits JAK1- and JAK2-mediated signaling and thus negatively regulates the IFN-gamma signaling. The polypeptide is Protein MGF 505-7R (African swine fever virus (isolate Pig/Kenya/KEN-50/1950) (ASFV)).